A 404-amino-acid chain; its full sequence is Schlafen-like protein 1 (404 aa).

Disordered regions lie at residues 1-31 (MTPM…LPTE) and 139-170 (GPLS…AWPT). Residues 7–16 (SVQTQVSEPF) are compositionally biased toward polar residues. Low complexity predominate over residues 152–165 (GLSPGPNPGSGVPL). 258 to 265 (GVEDSGLV) serves as a coordination point for ATP. Positions 365–395 (RWLVELGKLEERVKVLTMEKEQLQQQLQQHG) form a coiled coil.

This sequence belongs to the Schlafen family. Subgroup I subfamily.

The sequence is that of Schlafen-like protein 1 (SLFNL1) from Macaca fascicularis (Crab-eating macaque).